The sequence spans 356 residues: MGFYRNLVLVAASCTQALGLCPAPRCDSPDIRHEWGELSREDRLSYISAVQCMKDRPPELSVEEVPAVRSRYDDFTAVHINYTLQIHNSGIFLPWHRHFIWLWEKALREECGFTGTLPYWDWVMWPNLAASPLFDGTETSLSGDGEFNATEQPTELNPEPGLTITIPRGAGGGCVRTGPFKDWVINMGPFAFNESYEPALPDHAFDYNPRCLVRSLNDWVIQTYNNQTVVDTLLDSPDIVEFQNIMGGFPNPPIPIGPHAMGHRSLGPDMLDFFASPQDPAFWQHHGMVDRLWTVWQDADEPWRRFALNGSSTTWYKDDTPEVTLQTTVEFGILDEPRPLYELMSPTAGPYCYTYT.

Positions 1–19 (MGFYRNLVLVAASCTQALG) are cleaved as a signal peptide. Asn81 is a glycosylation site (N-linked (GlcNAc...) asparagine). Cu cation-binding residues include His87 and His96. 2 N-linked (GlcNAc...) asparagine glycosylation sites follow: Asn148 and Asn193. His203 contacts Cu cation. N-linked (GlcNAc...) asparagine glycosylation is present at Asn226. Cu cation-binding residues include His263 and His286. N-linked (GlcNAc...) asparagine glycosylation is present at Asn309.

This sequence belongs to the tyrosinase family. Requires Cu(2+) as cofactor. In terms of processing, glycosylated.

The protein resides in the endoplasmic reticulum lumen. The protein localises to the golgi apparatus lumen. It carries out the reaction aspulvinone E + O2 = (5Z)-3-(3,4-dihydroxyphenyl)-5-[(3,4-dihydroxyphenyl)methylidene]-5-oxo-2,5-dihydrofuran-3-olate. The catalysed reaction is aspulvinone E + O2 = (2Z)-2-[(3,4-dioxocyclohexa-1,5-dien-1-yl)methylidene]-4-(4-hydroxyphenyl)-5-oxo-2,5-dihydrofuran-3-olate + H2O. Activity is inhibited by the presence of dithiothreitol (DTT). Functionally, tyrosinase; part of the gene cluster that mediates the biosynthesis of Asp-melanin, a pigment that confers resistance against UV light and hampers phagocytosis by soil amoeba. The nonribosomal peptide synthase melA converts 4-hydroxyphenylpyruvate (4-HPPA) to aspulvinone E. The tyrosinase tyrP then performs hydroxylations of both aromatic moieties of aspulvinone E. The product of tyrP is highly unstable, and, due to the high reactivity of methides and ortho-diquinones, the polymeric Asp-melanin forms spontaneously. This chain is Tyrosinase P (tyrP), found in Aspergillus terreus.